The primary structure comprises 440 residues: 3-phosphoshikimate 1-carboxyvinyltransferase (440 aa).

3-phosphoshikimate is bound by residues Lys-25, Ser-26, and Arg-30. Phosphoenolpyruvate is bound at residue Lys-25. Residues Gly-96 and Arg-124 each coordinate phosphoenolpyruvate. Residues Ser-168, Gln-169, Asp-310, and Lys-337 each coordinate 3-phosphoshikimate. Position 169 (Gln-169) interacts with phosphoenolpyruvate. Asp-310 (proton acceptor) is an active-site residue. Residues Arg-341, Arg-382, and Lys-409 each contribute to the phosphoenolpyruvate site.

The protein belongs to the EPSP synthase family. Monomer.

The protein localises to the cytoplasm. The catalysed reaction is 3-phosphoshikimate + phosphoenolpyruvate = 5-O-(1-carboxyvinyl)-3-phosphoshikimate + phosphate. It participates in metabolic intermediate biosynthesis; chorismate biosynthesis; chorismate from D-erythrose 4-phosphate and phosphoenolpyruvate: step 6/7. Its function is as follows. Catalyzes the transfer of the enolpyruvyl moiety of phosphoenolpyruvate (PEP) to the 5-hydroxyl of shikimate-3-phosphate (S3P) to produce enolpyruvyl shikimate-3-phosphate and inorganic phosphate. This chain is 3-phosphoshikimate 1-carboxyvinyltransferase, found in Chlamydia trachomatis serovar L2 (strain ATCC VR-902B / DSM 19102 / 434/Bu).